We begin with the raw amino-acid sequence, 178 residues long: Matrix-remodeling-associated protein 7 (178 aa).

The chain crosses the membrane as a helical span at residues 7–27 (LLAALPALVTALALLLAWLLL). A disordered region spans residues 33–121 (RVPAPESTAS…AFSFKYSPGQ (89 aa)). The segment covering 48-65 (APAPPEPPESCAPEPAPE) has biased composition (pro residues). Residues 76–85 (PEESEAEEPA) show a composition bias toward acidic residues. A phosphoserine mark is found at serine 79 and serine 165.

It is found in the membrane. The polypeptide is Matrix-remodeling-associated protein 7 (Mxra7) (Mus musculus (Mouse)).